The chain runs to 426 residues: Mothers against decapentaplegic homolog 7 (426 aa).

Residues 14-42 (WRSRAPGGEDEEEGVGGGGGGGELRGEGA) are disordered. 2 positions are modified to N6-acetyllysine; alternate: Lys-64 and Lys-70. Residues Lys-64 and Lys-70 each participate in a glycyl lysine isopeptide (Lys-Gly) (interchain with G-Cter in ubiquitin); alternate cross-link. The MH1 domain maps to 64–207 (KAVRGAKGHH…LSRLCELESP (144 aa)). Residues 67 to 76 (RGAKGHHHPH) show a composition bias toward basic residues. Residues 67 to 87 (RGAKGHHHPHPPTSGAGAAGG) form a disordered region. Positions 125, 180, 192, and 197 each coordinate Zn(2+). Residues 208-211 (PPPY) carry the PY-motif motif. Residues 208 to 217 (PPPYSRYPMD) are important for interaction with SMURF2. Ser-249 carries the phosphoserine modification. The 166-residue stretch at 261–426 (WCVVAYWEEK…CWLEVIFNSR (166 aa)) folds into the MH2 domain.

This sequence belongs to the dwarfin/SMAD family. Interacts with COPS5. Interacts with STAMBP. Interacts with PPP1R15A. Interacts with NEDD4L. Interacts with RNF111, AXIN1 and AXIN2. Interacts with ACVR1B, SMURF1, SMURF2 and TGFBR1; SMAD7 recruits SMURF1 and SMURF2 to the TGF-beta receptor and regulates its degradation. Interacts with WWP1. Interacts with PDPK1 (via PH domain). Ubiquitinated by WWP1. Interacts with TSC22D1/TSC-22; the interaction requires TGF-beta and the interaction is inhibited by TGFBR1. Phosphorylation on Ser-249 does not affect its stability, nuclear localization or inhibitory function in TGFB signaling; however it affects its ability to regulate transcription. Phosphorylated by PDPK1. Post-translationally, ubiquitinated by WWP1. Polyubiquitinated by RNF111, which is enhanced by AXIN1 and promotes proteasomal degradation. In response to TGF-beta, ubiquitinated by SMURF1; which promotes its degradation. Ubiquitinated by ARK2C, promoting proteasomal degradation, leading to enhance the BMP-Smad signaling. In terms of processing, acetylation prevents ubiquitination and degradation mediated by SMURF1. As to expression, ubiquitous in various organs, with higher levels in brain and kidney.

It localises to the nucleus. The protein resides in the cytoplasm. Antagonist of signaling by TGF-beta (transforming growth factor) type 1 receptor superfamily members; has been shown to inhibit TGF-beta (Transforming growth factor) and activin signaling by associating with their receptors thus preventing SMAD2 access. Functions as an adapter to recruit SMURF2 to the TGF-beta receptor complex. Also acts by recruiting the PPP1R15A-PP1 complex to TGFBR1, which promotes its dephosphorylation. Positively regulates PDPK1 kinase activity by stimulating its dissociation from the 14-3-3 protein YWHAQ which acts as a negative regulator. In Mus musculus (Mouse), this protein is Mothers against decapentaplegic homolog 7 (Smad7).